The chain runs to 332 residues: 3-ketodihydrosphingosine reductase (332 aa).

The N-terminal stretch at 1–25 (MLLLAAAGLVAFVLLLYMVSPLISP) is a signal peptide. Over 26–270 (KPLALPGAHV…GNFNSSIGSD (245 aa)) the chain is Cytoplasmic. Glycine 39, serine 41, serine 42, glycine 43, arginine 64, lysine 68, and aspartate 93 together coordinate NADPH. The short motif at 39–43 (GGSSG) is the GXSXG element. The Proton donor role is filled by serine 172. The active-site Proton acceptor is tyrosine 186. Tyrosine 186 and lysine 190 together coordinate NADP(+). The Lowers pKa of active site Tyr role is filled by lysine 190. A helical transmembrane segment spans residues 271–291 (GYMLSSLTCGMAPVTSITEGL). Residues 292 to 293 (QQ) lie on the Lumenal side of the membrane. The chain crosses the membrane as a helical span at residues 294-314 (VVTMGLFRTIALFYLGSFDNI). The Cytoplasmic portion of the chain corresponds to 315–332 (VRRCMVQKAKPEVVDKTA).

Belongs to the short-chain dehydrogenases/reductases (SDR) family.

It is found in the endoplasmic reticulum membrane. The enzyme catalyses sphinganine + NADP(+) = 3-oxosphinganine + NADPH + H(+). It functions in the pathway lipid metabolism; sphingolipid metabolism. In terms of biological role, catalyzes the reduction of 3'-oxosphinganine (3-ketodihydrosphingosine/KDS) to sphinganine (dihydrosphingosine/DHS), the second step of de novo sphingolipid biosynthesis. The sequence is that of 3-ketodihydrosphingosine reductase (Kdsr) from Mus musculus (Mouse).